Reading from the N-terminus, the 292-residue chain is Mitochondrial ornithine transporter 1 (292 aa).

Solcar repeat units lie at residues 11–97, 105–196, and 211–292; these read EGAI…CSKF, SPLG…VKKS, and SKIW…LSAL. 6 consecutive transmembrane segments (helical) span residues 14–34, 69–89, 104–124, 171–187, 213–233, and 267–287; these read ILDIINGSIAGACGKVIEFPF, FFQGIASPLVGACLENATLFV, VSPLGQILISGGVAGSCASLV, GQSGTFIRESFGGVAWF, IWELLISGGSAGLAFNASIFP, and GLGITLFRAVPANAAVFYIFE.

Belongs to the mitochondrial carrier (TC 2.A.29) family.

The protein localises to the mitochondrion inner membrane. Functionally, required for arginine biosynthesis. Transports ornithine synthesized from glutamate in the mitochondrial matrix to the cytosol, where it is converted to arginine. The polypeptide is Mitochondrial ornithine transporter 1 (ORT1) (Saccharomyces cerevisiae (strain ATCC 204508 / S288c) (Baker's yeast)).